The chain runs to 275 residues: Large ribosomal subunit protein uL2 (275 aa).

2 disordered regions span residues 35 to 55 (EKQT…RHKG) and 223 to 260 (VAMN…KTRN). Over residues 39–49 (RSSGRNNQGRV) the composition is skewed to polar residues.

It belongs to the universal ribosomal protein uL2 family. Part of the 50S ribosomal subunit. Forms a bridge to the 30S subunit in the 70S ribosome.

Functionally, one of the primary rRNA binding proteins. Required for association of the 30S and 50S subunits to form the 70S ribosome, for tRNA binding and peptide bond formation. It has been suggested to have peptidyltransferase activity; this is somewhat controversial. Makes several contacts with the 16S rRNA in the 70S ribosome. In Methylococcus capsulatus (strain ATCC 33009 / NCIMB 11132 / Bath), this protein is Large ribosomal subunit protein uL2.